Here is a 159-residue protein sequence, read N- to C-terminus: Phosphopantetheine adenylyltransferase (159 aa).

A substrate-binding site is contributed by Thr-10. Residues 10 to 11 and His-18 contribute to the ATP site; that span reads TF. Substrate-binding residues include Lys-42, Met-74, and Arg-88. ATP is bound by residues 89–91, Glu-99, and 124–130; these read GLR and WSFISSS.

Belongs to the bacterial CoaD family. In terms of assembly, homohexamer. Requires Mg(2+) as cofactor.

The protein resides in the cytoplasm. It catalyses the reaction (R)-4'-phosphopantetheine + ATP + H(+) = 3'-dephospho-CoA + diphosphate. It participates in cofactor biosynthesis; coenzyme A biosynthesis; CoA from (R)-pantothenate: step 4/5. Functionally, reversibly transfers an adenylyl group from ATP to 4'-phosphopantetheine, yielding dephospho-CoA (dPCoA) and pyrophosphate. This is Phosphopantetheine adenylyltransferase from Citrobacter koseri (strain ATCC BAA-895 / CDC 4225-83 / SGSC4696).